The following is a 530-amino-acid chain: AP-4 complex subunit mu (530 aa).

The segment at Pro164–Thr187 is disordered. Residues Ser173–Ser186 are compositionally biased toward low complexity. One can recognise an MHD domain in the interval Asp227–Arg527.

Belongs to the adaptor complexes medium subunit family. May be part of the adaptor protein complex 4 (AP-4), a heterotetramer composed of two large adaptins (epsilon-type subunitand beta-type subunit), a medium adaptin (mu-type subunit) and a small adaptin (sigma-type).

It is found in the golgi apparatus. Its subcellular location is the trans-Golgi network membrane. The protein localises to the early endosome. In terms of biological role, probable component of an adaptor protein complex. Adaptor protein complexes are vesicle coat components involved both in vesicle formation and cargo selection. They control the vesicular transport of proteins in different trafficking pathways. The polypeptide is AP-4 complex subunit mu (apm4) (Dictyostelium discoideum (Social amoeba)).